We begin with the raw amino-acid sequence, 1322 residues long: Protein fantom (1322 aa).

A signal peptide spans 1-22 (MVSARYPIEKWSRPQLEDHFHN). The stretch at 15–89 (QLEDHFHNVV…MKLKAAKQQL (75 aa)) forms a coiled coil. Over residues 108 to 119 (RSTFRQPPSTFR) the composition is skewed to polar residues. Disordered stretches follow at residues 108 to 151 (RSTF…GEKL), 189 to 275 (KSSV…PDQT), and 392 to 418 (RIEE…SQSE). The segment covering 195–217 (SSPPTRLSTSSSSKSSSSNNNND) has biased composition (low complexity). Acidic residues predominate over residues 224–234 (ELEEMSEMSDD). Positions 274-362 (QTEKVLLDKL…EDQKKFEAMR (89 aa)) form a coiled coil. Residues 456–538 (ASENSLARWQ…FMLEEQIRTI (83 aa)) adopt a coiled-coil conformation. Disordered regions lie at residues 891–1094 (AELH…KPRN) and 1121–1149 (TDPL…PVPL). Over residues 918–927 (TDSSDTSFSH) the composition is skewed to low complexity. Acidic residues predominate over residues 956–975 (SDGEEEADRIVFDDDDDEIE). The span at 984–996 (RDPEPLEVPERQV) shows a compositional bias: basic and acidic residues. Residues 1015 to 1029 (NGTNESKESTPVTQR) are compositionally biased toward polar residues. The span at 1042-1067 (PELEPESGPEPEPVVESEPNEVAETE) shows a compositional bias: acidic residues. Residues 1068-1080 (EDRKRELKTEELK) show a composition bias toward basic and acidic residues. Over residues 1127 to 1139 (SVPPSESSSTSSP) the composition is skewed to low complexity.

It belongs to the RPGRIP1 family. As to expression, expressed at the transition zone at the base of cilia. Expressed in ciliated sensory neurons, including the amphid neurons in the head.

Its subcellular location is the cell projection. It localises to the cilium. In terms of biological role, thought to have an important role in cilia formation and cilia-mediated chemosensation. Involved in the docking of other MKS/MKSR proteins localized to the transition zone of the cilia. This Caenorhabditis elegans protein is Protein fantom (mks-5).